A 313-amino-acid chain; its full sequence is E3 ubiquitin-protein ligase siah2 (313 aa).

The segment at 1–49 (MSRPSSAGPCASKPCGKQKQPPPPPPHAPSLPATISGGPGASAPPAPTA) is disordered. The segment covering 20 to 29 (QPPPPPPHAP) has biased composition (pro residues). The RING-type zinc-finger motif lies at 69-104 (CPVCFDYVLPPILQCQAGHLVCNQCRQKLSCCPTCR). Residues 119-311 (VASAVLFPCK…LGINVTISTC (193 aa)) are SBD. The SIAH-type zinc finger occupies 122 to 182 (AVLFPCKYAS…VMQHLTHSHK (61 aa)). Residues cysteine 127, cysteine 134, histidine 146, cysteine 150, cysteine 157, cysteine 164, histidine 176, and histidine 181 each contribute to the Zn(2+) site.

The protein belongs to the SINA (Seven in absentia) family. In terms of assembly, homodimer. In terms of tissue distribution, widely expressed in early embryos until stage 40. It is then expressed in brain, spinal cord and in the developing and mature eye.

It localises to the cytoplasm. The enzyme catalyses S-ubiquitinyl-[E2 ubiquitin-conjugating enzyme]-L-cysteine + [acceptor protein]-L-lysine = [E2 ubiquitin-conjugating enzyme]-L-cysteine + N(6)-ubiquitinyl-[acceptor protein]-L-lysine.. It functions in the pathway protein modification; protein ubiquitination. Its function is as follows. E3 ubiquitin-protein ligase that mediates ubiquitination and subsequent proteasomal degradation of target proteins. E3 ubiquitin ligases accept ubiquitin from an E2 ubiquitin-conjugating enzyme in the form of a thioester and then directly transfers the ubiquitin to targeted substrates. Involved in eye morphogenesis, probably triggers the ubiquitin-mediated degradation of different substrates. May play a role in the regulation of the cellular clock function. The polypeptide is E3 ubiquitin-protein ligase siah2 (siah2) (Xenopus laevis (African clawed frog)).